Here is a 70-residue protein sequence, read N- to C-terminus: Fumarase D (70 aa).

The protein belongs to the FumD family.

It carries out the reaction (S)-malate = fumarate + H2O. In vitro catalyzes the addition of water to fumarate, forming malate. Cannot catalyze the reverse reaction. Cannot use the cis-isomer maleate as substrate. The sequence is that of Fumarase D from Salmonella typhi.